Consider the following 292-residue polypeptide: Aquaporin-3 (292 aa).

Topologically, residues 1–24 (MGRQKELMNRCGEMLHIRYRLLRQ) are cytoplasmic. A helical membrane pass occupies residues 25–42 (ALAECLGTLILVMFGCGS). Topologically, residues 43 to 56 (VAQVVLSRGTHGGF) are extracellular. The chain crosses the membrane as a helical span at residues 57–74 (LTINLAFGFAVTLGILVA). Residues 75-78 (GQVS) lie on the Cytoplasmic side of the membrane. An intramembrane region (discontinuously helical) is located at residues 79-92 (GAHLNPAVTFAMCF). The short motif at 83–85 (NPA) is the NPA 1 element. The Cytoplasmic portion of the chain corresponds to 93-100 (LAREPWIK). A helical membrane pass occupies residues 101 to 121 (LPIYALAQTLGAFLGAGIVFG). The Extracellular portion of the chain corresponds to 122–159 (LYYDAIWAFANNELFVSGPNGTAGIFATYPSGHLDMVN). N141 carries N-linked (GlcNAc...) asparagine glycosylation. The chain crosses the membrane as a helical span at residues 160 to 177 (GFFDQFIGTAALIVCVLA). Residues 178 to 189 (IVDPYNNPVPRG) lie on the Cytoplasmic side of the membrane. A helical transmembrane segment spans residues 190 to 206 (LEAFTVGLVVLVIGTSM). The Extracellular portion of the chain corresponds to 207–210 (GFNS). Positions 211-224 (GYAVNPARDFGPRL) form an intramembrane region, discontinuously helical. Residues 215–217 (NPA) carry the NPA 2 motif. Topologically, residues 225-242 (FTALAGWGSEVFTTGRHW) are extracellular. A helical membrane pass occupies residues 243–264 (WWVPIVSPLLGSIAGVFVYQLM). Residues 265–292 (IGCHLEQPPPSTEEENVKLAHMKHKEQI) are Cytoplasmic-facing.

It belongs to the MIP/aquaporin (TC 1.A.8) family. As to quaternary structure, homotetramer; each monomer provides an independent glycerol/water pore. Could also exist in other oligomeric states. In terms of tissue distribution, detected in principal cells in collecting ducts in kidney medulla (at protein level). Renal medulla and colon. Predominantly in the inner medulla. Expressed in basal layer of epidermal keratinocytes.

The protein localises to the cell membrane. The protein resides in the basolateral cell membrane. The enzyme catalyses glycerol(in) = glycerol(out). It carries out the reaction H2O(in) = H2O(out). It catalyses the reaction urea(in) = urea(out). The catalysed reaction is H2O2(out) = H2O2(in). Aquaglyceroporins form homotetrameric transmembrane channels, with each monomer independently mediating glycerol and water transport across the plasma membrane along their osmotic gradient. Could also be permeable to urea. Also participates in cell permeability to H2O2 and H2O2-mediated signaling. In skin, transports glycerol to the epidermis and stratum corneum, where it maintains hydration, elasticity, and supports lipid biosynthesis for barrier repair. In kidney, contributes to the reabsorption of water, helping the body maintain proper fluid balance. This Mus musculus (Mouse) protein is Aquaporin-3.